The primary structure comprises 412 residues: Tyrosine--tRNA ligase (412 aa).

Residue Tyr31 coordinates L-tyrosine. Positions 36 to 45 (PTAPSLHIGH) match the 'HIGH' region motif. Tyr162 and Gln166 together coordinate L-tyrosine. Residues 222 to 226 (KIGKT) carry the 'KMSKS' region motif. An ATP-binding site is contributed by Lys225. The S4 RNA-binding domain occupies 345–411 (KRWLDIVVEL…GKRKKQVIDL (67 aa)).

The protein belongs to the class-I aminoacyl-tRNA synthetase family. TyrS type 1 subfamily. Homodimer.

It is found in the cytoplasm. It carries out the reaction tRNA(Tyr) + L-tyrosine + ATP = L-tyrosyl-tRNA(Tyr) + AMP + diphosphate + H(+). Its function is as follows. Catalyzes the attachment of tyrosine to tRNA(Tyr) in a two-step reaction: tyrosine is first activated by ATP to form Tyr-AMP and then transferred to the acceptor end of tRNA(Tyr). This chain is Tyrosine--tRNA ligase, found in Chlamydia trachomatis serovar L2 (strain ATCC VR-902B / DSM 19102 / 434/Bu).